We begin with the raw amino-acid sequence, 290 residues long: Phycobilisome 32.3 kDa linker polypeptide, phycocyanin-associated, rod (290 aa).

Positions 1 to 179 (MPVTVAASRL…LQRGYANSDR (179 aa)) constitute a PBS-linker domain. The 53-residue stretch at 236–288 (DQVVRVEVAALSTPRYPRIRRSSRVFFVPVSRLSQKLQEIQRMGGRVASISPA) folds into the CpcD-like domain.

The protein belongs to the phycobilisome linker protein family.

The protein localises to the cellular thylakoid membrane. Rod linker protein, associated with phycocyanin. Linker polypeptides determine the state of aggregation and the location of the disk-shaped phycobiliprotein units within the phycobilisome and modulate their spectroscopic properties in order to mediate a directed and optimal energy transfer. This chain is Phycobilisome 32.3 kDa linker polypeptide, phycocyanin-associated, rod (cpcC), found in Picosynechococcus sp. (strain ATCC 27264 / PCC 7002 / PR-6) (Agmenellum quadruplicatum).